We begin with the raw amino-acid sequence, 119 residues long: Large ribosomal subunit protein bL20 (119 aa).

Belongs to the bacterial ribosomal protein bL20 family.

Functionally, binds directly to 23S ribosomal RNA and is necessary for the in vitro assembly process of the 50S ribosomal subunit. It is not involved in the protein synthesizing functions of that subunit. The protein is Large ribosomal subunit protein bL20 of Acidovorax sp. (strain JS42).